We begin with the raw amino-acid sequence, 165 residues long: MTVTLAGNPIEVGGHFPQVGEIVENFILVGNDLADVALNDFASKRKVLNIFPSIDTGVCATSVRKFNQQAAKLSNTIVLCISADLPFAQARFCGAEGIENAKTVSTFRNHALHSQLGVDIQTGPLAGLTSRAVIVLDEQNNVLHSQLVEEIKEEPNYEAALAVLA.

Residues proline 17–alanine 165 form the Thioredoxin domain. Cysteine 59 acts as the Cysteine sulfenic acid (-SOH) intermediate in catalysis. A disulfide bridge connects residues cysteine 59 and cysteine 93.

This sequence belongs to the peroxiredoxin family. Tpx subfamily. Homodimer.

The enzyme catalyses a hydroperoxide + [thioredoxin]-dithiol = an alcohol + [thioredoxin]-disulfide + H2O. Thiol-specific peroxidase that catalyzes the reduction of hydrogen peroxide and organic hydroperoxides to water and alcohols, respectively. Plays a role in cell protection against oxidative stress by detoxifying peroxides. The chain is Thiol peroxidase from Haemophilus influenzae (strain ATCC 51907 / DSM 11121 / KW20 / Rd).